The sequence spans 203 residues: Fucoxanthin-chlorophyll a-c binding protein, chloroplastic (203 aa).

The N-terminal 30 residues, 1 to 30 (MKLAIAALLAGSAAAFAPAQSGKASTALNM), are a transit peptide targeting the chloroplast.

This sequence belongs to the fucoxanthin chlorophyll protein family. The LHC complex of chromophytic algae is composed of fucoxanthin, chlorophyll A and C bound non-covalently by fucoxanthin chlorophyll proteins (FCPs). The ratio of pigments in this LHC is; fucoxanthin: chlorophyll C: chlorophyll A; (0.6-1): (0.1-0.3): (1).

Its subcellular location is the plastid. The protein localises to the chloroplast thylakoid membrane. The light-harvesting complex (LHC) functions as a light receptor, it captures and delivers excitation energy to photosystems with which it is closely associated. Energy is transferred from the carotenoid and chlorophyll C (or B) to chlorophyll A and the photosynthetic reaction centers where it is used to synthesize ATP and reducing power. The chain is Fucoxanthin-chlorophyll a-c binding protein, chloroplastic (FCPA) from Trieres chinensis (Marine centric diatom).